We begin with the raw amino-acid sequence, 212 residues long: Interleukin-6 (212 aa).

Positions 1-29 (MNSFSTSAFGPVAFSLGLLLVLPAAFPAP) are cleaved as a signal peptide. Cystine bridges form between C72/C78 and C101/C111. An N-linked (GlcNAc...) asparagine glycan is attached at N73. N172 is a glycosylation site (N-linked (GlcNAc...) asparagine).

The protein belongs to the IL-6 superfamily. In terms of assembly, component of a hexamer of two molecules each of IL6, IL6R and IL6ST; first binds to IL6R to associate with the signaling subunit IL6ST. Interacts with IL6R (via the N-terminal ectodomain); this interaction may be affected by IL6R-binding with SORL1, hence decreasing IL6 cis signaling. Interacts with SORL1 (via the N-terminal ectodomain); this interaction leads to IL6 internalization and lysosomal degradation. May form a trimeric complex with the soluble SORL1 ectodomain and soluble IL6R receptor; this interaction might stabilize circulating IL6, hence promoting IL6 trans signaling.

It is found in the secreted. In terms of biological role, cytokine with a wide variety of biological functions in immunity, tissue regeneration, and metabolism. Binds to IL6R, then the complex associates to the signaling subunit IL6ST/gp130 to trigger the intracellular IL6-signaling pathway. The interaction with the membrane-bound IL6R and IL6ST stimulates 'classic signaling', whereas the binding of IL6 and soluble IL6R to IL6ST stimulates 'trans-signaling'. Alternatively, 'cluster signaling' occurs when membrane-bound IL6:IL6R complexes on transmitter cells activate IL6ST receptors on neighboring receiver cells. Its function is as follows. IL6 is a potent inducer of the acute phase response. Rapid production of IL6 contributes to host defense during infection and tissue injury, but excessive IL6 synthesis is involved in disease pathology. In the innate immune response, is synthesized by myeloid cells, such as macrophages and dendritic cells, upon recognition of pathogens through toll-like receptors (TLRs) at the site of infection or tissue injury. In the adaptive immune response, is required for the differentiation of B cells into immunoglobulin-secreting cells. Plays a major role in the differentiation of CD4(+) T cell subsets. Essential factor for the development of T follicular helper (Tfh) cells that are required for the induction of germinal-center formation. Required to drive naive CD4(+) T cells to the Th17 lineage. Also required for proliferation of myeloma cells and the survival of plasmablast cells. Functionally, acts as an essential factor in bone homeostasis and on vessels directly or indirectly by induction of VEGF, resulting in increased angiogenesis activity and vascular permeability. Induces, through 'trans-signaling' and synergistically with IL1B and TNF, the production of VEGF. Involved in metabolic controls, is discharged into the bloodstream after muscle contraction increasing lipolysis and improving insulin resistance. 'Trans-signaling' in central nervous system also regulates energy and glucose homeostasis. Mediates, through GLP-1, crosstalk between insulin-sensitive tissues, intestinal L cells and pancreatic islets to adapt to changes in insulin demand. Also acts as a myokine. Plays a protective role during liver injury, being required for maintenance of tissue regeneration. Also has a pivotal role in iron metabolism by regulating HAMP/hepcidin expression upon inflammation or bacterial infection. Through activation of IL6ST-YAP-NOTCH pathway, induces inflammation-induced epithelial regeneration. The polypeptide is Interleukin-6 (IL6) (Cercocebus atys (Sooty mangabey)).